The chain runs to 489 residues: Ketol-acid reductoisomerase (NADP(+)) (489 aa).

Positions 16–207 constitute a KARI N-terminal Rossmann domain; that stretch reads LRKCKLVEKN…GSHRAGVLHS (192 aa). NADP(+) contacts are provided by residues 44-47, Arg67, Ser77, and 107-109; these read CGSQ and DKQ. His131 is an active-site residue. Gly157 is a binding site for NADP(+). 2 KARI C-terminal knotted domains span residues 208–343 and 344–483; these read SFIA…KCKI and CHKE…MVDM. Mg(2+)-binding residues include Asp216, Glu220, Glu388, and Glu392. Ser413 serves as a coordination point for substrate.

It belongs to the ketol-acid reductoisomerase family. Mg(2+) is required as a cofactor.

The enzyme catalyses (2R)-2,3-dihydroxy-3-methylbutanoate + NADP(+) = (2S)-2-acetolactate + NADPH + H(+). The catalysed reaction is (2R,3R)-2,3-dihydroxy-3-methylpentanoate + NADP(+) = (S)-2-ethyl-2-hydroxy-3-oxobutanoate + NADPH + H(+). The protein operates within amino-acid biosynthesis; L-isoleucine biosynthesis; L-isoleucine from 2-oxobutanoate: step 2/4. It functions in the pathway amino-acid biosynthesis; L-valine biosynthesis; L-valine from pyruvate: step 2/4. In terms of biological role, involved in the biosynthesis of branched-chain amino acids (BCAA). Catalyzes an alkyl-migration followed by a ketol-acid reduction of (S)-2-acetolactate (S2AL) to yield (R)-2,3-dihydroxy-isovalerate. In the isomerase reaction, S2AL is rearranged via a Mg-dependent methyl migration to produce 3-hydroxy-3-methyl-2-ketobutyrate (HMKB). In the reductase reaction, this 2-ketoacid undergoes a metal-dependent reduction by NADPH to yield (R)-2,3-dihydroxy-isovalerate. The polypeptide is Ketol-acid reductoisomerase (NADP(+)) (Buchnera aphidicola subsp. Schlechtendalia chinensis).